The following is a 448-amino-acid chain: Asparagine--tRNA ligase (448 aa).

Belongs to the class-II aminoacyl-tRNA synthetase family. Homodimer.

Its subcellular location is the cytoplasm. It carries out the reaction tRNA(Asn) + L-asparagine + ATP = L-asparaginyl-tRNA(Asn) + AMP + diphosphate + H(+). The polypeptide is Asparagine--tRNA ligase (Streptococcus sanguinis (strain SK36)).